Consider the following 429-residue polypeptide: 3-phosphoshikimate 1-carboxyvinyltransferase (429 aa).

3-phosphoshikimate is bound by residues lysine 22, serine 23, and arginine 27. Lysine 22 is a phosphoenolpyruvate binding site. The phosphoenolpyruvate site is built by glycine 93 and arginine 122. The 3-phosphoshikimate site is built by serine 168, serine 169, glutamine 170, serine 196, aspartate 311, and lysine 338. Residue glutamine 170 participates in phosphoenolpyruvate binding. Aspartate 311 functions as the Proton acceptor in the catalytic mechanism. Residues arginine 342 and arginine 384 each contribute to the phosphoenolpyruvate site.

This sequence belongs to the EPSP synthase family. As to quaternary structure, monomer.

The protein resides in the cytoplasm. It carries out the reaction 3-phosphoshikimate + phosphoenolpyruvate = 5-O-(1-carboxyvinyl)-3-phosphoshikimate + phosphate. Its pathway is metabolic intermediate biosynthesis; chorismate biosynthesis. Its function is as follows. Catalyzes the transfer of the enolpyruvyl moiety of phosphoenolpyruvate (PEP) to the 5-hydroxyl of shikimate-3-phosphate (S3P) to produce enolpyruvyl shikimate-3-phosphate and inorganic phosphate. This Methanocaldococcus jannaschii (strain ATCC 43067 / DSM 2661 / JAL-1 / JCM 10045 / NBRC 100440) (Methanococcus jannaschii) protein is 3-phosphoshikimate 1-carboxyvinyltransferase.